A 358-amino-acid chain; its full sequence is Alanine racemase (358 aa).

Residue Lys-35 is the Proton acceptor; specific for D-alanine of the active site. Lys-35 carries the post-translational modification N6-(pyridoxal phosphate)lysine. Substrate is bound at residue Arg-130. Catalysis depends on Tyr-255, which acts as the Proton acceptor; specific for L-alanine. Met-303 is a binding site for substrate.

It belongs to the alanine racemase family. It depends on pyridoxal 5'-phosphate as a cofactor.

The catalysed reaction is L-alanine = D-alanine. It participates in amino-acid biosynthesis; D-alanine biosynthesis; D-alanine from L-alanine: step 1/1. In terms of biological role, catalyzes the interconversion of L-alanine and D-alanine. May also act on other amino acids. This is Alanine racemase (alr) from Shewanella sp. (strain ANA-3).